Consider the following 539-residue polypeptide: Chaperonin GroEL (539 aa).

Residues 29–32, 86–90, Gly413, 476–478, and Asp492 contribute to the ATP site; these read TLGP, DGTTT, and NAA.

It belongs to the chaperonin (HSP60) family. Forms a cylinder of 14 subunits composed of two heptameric rings stacked back-to-back. Interacts with the co-chaperonin GroES.

It localises to the cytoplasm. The enzyme catalyses ATP + H2O + a folded polypeptide = ADP + phosphate + an unfolded polypeptide.. Its function is as follows. Together with its co-chaperonin GroES, plays an essential role in assisting protein folding. The GroEL-GroES system forms a nano-cage that allows encapsulation of the non-native substrate proteins and provides a physical environment optimized to promote and accelerate protein folding. The polypeptide is Chaperonin GroEL (Geobacillus sp. (strain WCH70)).